The following is a 419-amino-acid chain: UDP-N-acetylglucosamine 1-carboxyvinyltransferase (419 aa).

22–23 (KN) serves as a coordination point for phosphoenolpyruvate. Residue R95 coordinates UDP-N-acetyl-alpha-D-glucosamine. Residue C119 is the Proton donor of the active site. C119 is modified (2-(S-cysteinyl)pyruvic acid O-phosphothioketal). UDP-N-acetyl-alpha-D-glucosamine is bound by residues 164–167 (KVSV), D308, and I330.

The protein belongs to the EPSP synthase family. MurA subfamily.

It localises to the cytoplasm. It catalyses the reaction phosphoenolpyruvate + UDP-N-acetyl-alpha-D-glucosamine = UDP-N-acetyl-3-O-(1-carboxyvinyl)-alpha-D-glucosamine + phosphate. It participates in cell wall biogenesis; peptidoglycan biosynthesis. In terms of biological role, cell wall formation. Adds enolpyruvyl to UDP-N-acetylglucosamine. This is UDP-N-acetylglucosamine 1-carboxyvinyltransferase from Rickettsia massiliae (strain Mtu5).